The chain runs to 172 residues: uncharacterized protein (172 aa).

Helical transmembrane passes span 1–21 (MLFI…SLSI), 41–61 (NSTL…IEAN), 72–92 (QIGL…IYEL), and 136–156 (FCQA…ILAV).

The protein resides in the cell membrane. This is an uncharacterized protein from Haemophilus influenzae (strain ATCC 51907 / DSM 11121 / KW20 / Rd).